The chain runs to 45 residues: uncharacterized protein (45 aa).

A helical transmembrane segment spans residues 15 to 37 (EVVGTLMAVLITFALVAVVFNFI).

The protein localises to the membrane. This is an uncharacterized protein from Archaeoglobus fulgidus (strain ATCC 49558 / DSM 4304 / JCM 9628 / NBRC 100126 / VC-16).